A 359-amino-acid chain; its full sequence is MEYNKKLYEAIERVAIKNDALKKELETVVTDFKKIKEINIQLKKTTKIAEAFAKYKQKLDTGIAAEKILNTEKDLELIELAQMDLDEAKINIPIIENDLKIMLLPTDPNDDKNVIVEMRPAAGGDESSIFVGNLFDTYRAYAENNNWKMKIIEMTPNAVGFSFISFMISGEEVYSRMKFESGVHRVQRVPATESKGRVHTSTITVAVLPEQDEVDVVINPTELRIDTYRASGAGGQHVNRTESAVRITHIPTGVVAACQEGKSQIENRETAMKMLRAKLWEAAQEQQNAEFANLRKNQVGTGDRSEKIRTYNYPQNRVTDHRINLTLNKLDQIMMGELDEIIDALIADEQTGLMANLDI.

Glutamine 236 is modified (N5-methylglutamine).

Belongs to the prokaryotic/mitochondrial release factor family. Methylated by PrmC. Methylation increases the termination efficiency of RF1.

It is found in the cytoplasm. Peptide chain release factor 1 directs the termination of translation in response to the peptide chain termination codons UAG and UAA. The sequence is that of Peptide chain release factor 1 from Ureaplasma parvum serovar 3 (strain ATCC 27815 / 27 / NCTC 11736).